The primary structure comprises 768 residues: Ribonucleoside-diphosphate reductase large chain (768 aa).

ATP is bound by residues 7 to 8 (SK) and 13 to 19 (EKLGIDL). GDP is bound by residues Thr196 and Ser211. The cysteines at positions 212 and 437 are disulfide-linked. DTTP is bound by residues 220-222 (DSI), Lys237, and Arg250. Asn420 contributes to the GDP binding site. Catalysis depends on Asn420, which acts as the Proton acceptor. Residue Cys422 is the Cysteine radical intermediate of the active site. GDP is bound at residue Glu424. Catalysis depends on Glu424, which acts as the Proton acceptor.

It belongs to the ribonucleoside diphosphate reductase large chain family. As to quaternary structure, heterodimer of a large and a small subunit.

It carries out the reaction a 2'-deoxyribonucleoside 5'-diphosphate + [thioredoxin]-disulfide + H2O = a ribonucleoside 5'-diphosphate + [thioredoxin]-dithiol. Under complex allosteric control mediated by deoxynucleoside triphosphates and ATP binding to separate specificity and activation sites on the large subunit. The type of nucleotide bound at the specificity site determines substrate preference. It seems probable that ATP makes the enzyme reduce CDP and UDP, dGTP favors ADP reduction and dTTP favors GDP reduction. Stimulated by ATP and inhibited by dATP binding to the activity site. Provides the precursors necessary for DNA synthesis. Catalyzes the biosynthesis of deoxyribonucleotides from the corresponding ribonucleotides. In Encephalitozoon cuniculi (strain GB-M1) (Microsporidian parasite), this protein is Ribonucleoside-diphosphate reductase large chain.